Consider the following 129-residue polypeptide: Large ribosomal subunit protein bL20 (129 aa).

It belongs to the bacterial ribosomal protein bL20 family.

Binds directly to 23S ribosomal RNA and is necessary for the in vitro assembly process of the 50S ribosomal subunit. It is not involved in the protein synthesizing functions of that subunit. The sequence is that of Large ribosomal subunit protein bL20 from Mycobacterium marinum (strain ATCC BAA-535 / M).